A 207-amino-acid chain; its full sequence is Protein GrpE (207 aa).

It belongs to the GrpE family. Homodimer.

Its subcellular location is the cytoplasm. Participates actively in the response to hyperosmotic and heat shock by preventing the aggregation of stress-denatured proteins, in association with DnaK and GrpE. It is the nucleotide exchange factor for DnaK and may function as a thermosensor. Unfolded proteins bind initially to DnaJ; upon interaction with the DnaJ-bound protein, DnaK hydrolyzes its bound ATP, resulting in the formation of a stable complex. GrpE releases ADP from DnaK; ATP binding to DnaK triggers the release of the substrate protein, thus completing the reaction cycle. Several rounds of ATP-dependent interactions between DnaJ, DnaK and GrpE are required for fully efficient folding. This is Protein GrpE from Pelodictyon phaeoclathratiforme (strain DSM 5477 / BU-1).